A 244-amino-acid polypeptide reads, in one-letter code: uncharacterized protein (244 aa).

A run of 4 helical transmembrane segments spans residues 20–42 (TITA…VVLI), 49–67 (FVYI…ATKV), 82–101 (TPSI…ASVF), and 108–125 (AFLV…ATPI).

The protein resides in the cell membrane. This is an uncharacterized protein from Archaeoglobus fulgidus (strain ATCC 49558 / DSM 4304 / JCM 9628 / NBRC 100126 / VC-16).